Here is an 85-residue protein sequence, read N- to C-terminus: Large ribosomal subunit protein bL27 (85 aa).

It belongs to the bacterial ribosomal protein bL27 family.

The sequence is that of Large ribosomal subunit protein bL27 from Mycobacteroides abscessus (strain ATCC 19977 / DSM 44196 / CCUG 20993 / CIP 104536 / JCM 13569 / NCTC 13031 / TMC 1543 / L948) (Mycobacterium abscessus).